The sequence spans 448 residues: NADP-specific glutamate dehydrogenase (448 aa).

Substrate contacts are provided by lysine 88, glutamine 109, and lysine 112. Residue lysine 124 is the Proton donor of the active site. Glycine 163 contributes to the substrate binding site. NADP(+) contacts are provided by threonine 207 and asparagine 238. Serine 381 lines the substrate pocket.

Belongs to the Glu/Leu/Phe/Val dehydrogenases family. Homohexamer.

It catalyses the reaction L-glutamate + NADP(+) + H2O = 2-oxoglutarate + NH4(+) + NADPH + H(+). In terms of biological role, catalyzes the reversible oxidative deamination of glutamate to alpha-ketoglutarate and ammonia. In Helicobacter pylori (strain ATCC 700392 / 26695) (Campylobacter pylori), this protein is NADP-specific glutamate dehydrogenase (gdhA).